The chain runs to 381 residues: Pentraxin-related protein PTX3 (381 aa).

The N-terminal stretch at 1-17 (MHLLAILFCALWSAVLA) is a signal peptide. 2 coiled-coil regions span residues 74–101 (LQATDDVLRGELQRLREELGRLAESLAR) and 143–167 (EEAGRALAAVLEELRQTRADLHAVQ). 2 disulfide bridges follow: C179–C357 and C210–C271. The region spanning 179-381 (CETAILFPMR…QPHGGAQYVS (203 aa)) is the Pentraxin (PTX) domain. N220 carries N-linked (GlcNAc...) asparagine glycosylation.

Homooctamer; disulfide-linked. Binds to C1q. In terms of assembly, (Microbial infection) Interacts with SARS coronavirus-2/SARS-CoV-2 Nucleoprotein and Spike protein homotrimer. In terms of processing, glycosylated.

It localises to the secreted. Plays a role in the regulation of innate resistance to pathogens, inflammatory reactions, possibly clearance of self-components and female fertility. The chain is Pentraxin-related protein PTX3 from Homo sapiens (Human).